Consider the following 376-residue polypeptide: Erythronate-4-phosphate dehydrogenase (376 aa).

Ser45 and Thr67 together coordinate substrate. Position 147 (Asp147) interacts with NAD(+). Arg209 is a catalytic residue. Asp233 is a binding site for NAD(+). Glu238 is a catalytic residue. The active-site Proton donor is His255. Residue Gly258 participates in NAD(+) binding. Residue Tyr259 participates in substrate binding.

This sequence belongs to the D-isomer specific 2-hydroxyacid dehydrogenase family. PdxB subfamily. Homodimer.

Its subcellular location is the cytoplasm. It carries out the reaction 4-phospho-D-erythronate + NAD(+) = (R)-3-hydroxy-2-oxo-4-phosphooxybutanoate + NADH + H(+). It participates in cofactor biosynthesis; pyridoxine 5'-phosphate biosynthesis; pyridoxine 5'-phosphate from D-erythrose 4-phosphate: step 2/5. Functionally, catalyzes the oxidation of erythronate-4-phosphate to 3-hydroxy-2-oxo-4-phosphonooxybutanoate. This is Erythronate-4-phosphate dehydrogenase from Shewanella baltica (strain OS185).